Consider the following 334-residue polypeptide: MLKTAIIGASGYTGAELALMVFKHPHLSLSGLYVSENSLDKGKAISELHGSLKGIVDEALQPLVNVNQAAKECDVILLATAHEVSHNLAATFLENGCVVFDLSGAFRVKKEGFYSEFYGFEHQYEAWLDKAVYGLAEWNAEAIAKAQLVAVPGCYPTASQLALKPLVKSELLDKNQWPVINATSGVTGAGRKASLTSSFCEVSLQPYGVFNHRHQPEIAAHLGCDVIFTPHLGNFKRGILATITTKLAKGVTEKEIQEAFETAYTQTPAVRLLENEMPKIQSVEKTPFCDIGWKVQGEHLIVVSAIDNLLKGASSQAMQCINIRFGFPVLTALI.

Residue C154 is part of the active site.

Belongs to the NAGSA dehydrogenase family. Type 1 subfamily.

It localises to the cytoplasm. It carries out the reaction N-acetyl-L-glutamate 5-semialdehyde + phosphate + NADP(+) = N-acetyl-L-glutamyl 5-phosphate + NADPH + H(+). It functions in the pathway amino-acid biosynthesis; L-arginine biosynthesis; N(2)-acetyl-L-ornithine from L-glutamate: step 3/4. Catalyzes the NADPH-dependent reduction of N-acetyl-5-glutamyl phosphate to yield N-acetyl-L-glutamate 5-semialdehyde. The polypeptide is N-acetyl-gamma-glutamyl-phosphate reductase (Aliivibrio fischeri (strain ATCC 700601 / ES114) (Vibrio fischeri)).